A 946-amino-acid polypeptide reads, in one-letter code: Bifunctional glutamine synthetase adenylyltransferase/adenylyl-removing enzyme (946 aa).

The interval 1–440 (MKPLSSPLQQ…VFNELIGDDE (440 aa)) is adenylyl removase. The segment at 449–946 (SEHWRELWQD…ASWQKWLVAG (498 aa)) is adenylyl transferase.

This sequence belongs to the GlnE family. The cofactor is Mg(2+).

It catalyses the reaction [glutamine synthetase]-O(4)-(5'-adenylyl)-L-tyrosine + phosphate = [glutamine synthetase]-L-tyrosine + ADP. The enzyme catalyses [glutamine synthetase]-L-tyrosine + ATP = [glutamine synthetase]-O(4)-(5'-adenylyl)-L-tyrosine + diphosphate. Functionally, involved in the regulation of glutamine synthetase GlnA, a key enzyme in the process to assimilate ammonia. When cellular nitrogen levels are high, the C-terminal adenylyl transferase (AT) inactivates GlnA by covalent transfer of an adenylyl group from ATP to specific tyrosine residue of GlnA, thus reducing its activity. Conversely, when nitrogen levels are low, the N-terminal adenylyl removase (AR) activates GlnA by removing the adenylyl group by phosphorolysis, increasing its activity. The regulatory region of GlnE binds the signal transduction protein PII (GlnB) which indicates the nitrogen status of the cell. In Citrobacter koseri (strain ATCC BAA-895 / CDC 4225-83 / SGSC4696), this protein is Bifunctional glutamine synthetase adenylyltransferase/adenylyl-removing enzyme.